A 450-amino-acid polypeptide reads, in one-letter code: Solute carrier family 52, riboflavin transporter, member 2 (450 aa).

The next 5 membrane-spanning stretches (helical) occupy residues 14–34, 47–67, 86–106, 112–132, and 147–167; these read LLVA…WVEL, LPSY…LVTL, GLGI…APVA, VAFL…NVTF, and FFLG…GQGV. Asparagine 178 carries an N-linked (GlcNAc...) asparagine glycan. Residues 201–221 form a helical membrane-spanning segment; the sequence is FFWVLTALLGTSAAAFQGLLL. Over residues 227–236 the composition is skewed to low complexity; the sequence is TSEPTTGTGL. The interval 227 to 264 is disordered; that stretch reads TSEPTTGTGLRVETPGTEEEEEEEEASPLQEPPGQVAG. The span at 242 to 252 shows a compositional bias: acidic residues; sequence GTEEEEEEEEA. 5 helical membrane passes run 282–302, 317–337, 344–364, 369–389, and 409–429; these read ACLL…LPAV, LAVV…MAVL, LCGL…LAAL, PLVG…LCAG, and ALLA…VAMF.

This sequence belongs to the riboflavin transporter family.

The protein resides in the cell membrane. The enzyme catalyses riboflavin(in) = riboflavin(out). With respect to regulation, riboflavin transport is Na(+)-independent but moderately pH-sensitive. Activity is strongly inhibited by riboflavin analogs, such as lumiflavin. Weakly inhibited by flavin adenine dinucleotide (FAD) and flavin mononucleotide (FMN). Plasma membrane transporter mediating the uptake by cells of the water soluble vitamin B2/riboflavin that plays a key role in biochemical oxidation-reduction reactions of the carbohydrate, lipid, and amino acid metabolism. May also act as a receptor for 4-hydroxybutyrate. In Mus musculus (Mouse), this protein is Solute carrier family 52, riboflavin transporter, member 2 (Slc52a2).